Here is a 451-residue protein sequence, read N- to C-terminus: GTPase Der (451 aa).

EngA-type G domains lie at 5-170 and 186-359; these read PVVA…VEPE and IKLA…AAAF. GTP is bound by residues 11–18, 58–62, 122–125, 192–199, 239–243, and 304–307; these read GRPNVGKS, DTGGF, NKAE, DTAGL, and NKWD. One can recognise a KH-like domain in the interval 360–444; it reads AKLSTPKLTR…PLRIEFKSSR (85 aa).

This sequence belongs to the TRAFAC class TrmE-Era-EngA-EngB-Septin-like GTPase superfamily. EngA (Der) GTPase family. In terms of assembly, associates with the 50S ribosomal subunit.

Functionally, GTPase that plays an essential role in the late steps of ribosome biogenesis. This Bordetella petrii (strain ATCC BAA-461 / DSM 12804 / CCUG 43448) protein is GTPase Der.